The chain runs to 473 residues: Ribulose bisphosphate carboxylase large chain (473 aa).

Asparagine 116 and threonine 166 together coordinate substrate. Lysine 168 serves as the catalytic Proton acceptor. Position 170 (lysine 170) interacts with substrate. Mg(2+)-binding residues include lysine 194, aspartate 196, and glutamate 197. Lysine 194 is modified (N6-carboxylysine). The active-site Proton acceptor is the histidine 287. Substrate is bound by residues arginine 288, histidine 320, and serine 372.

It belongs to the RuBisCO large chain family. Type I subfamily. In terms of assembly, heterohexadecamer of 8 large chains and 8 small chains. Mg(2+) serves as cofactor.

It carries out the reaction 2 (2R)-3-phosphoglycerate + 2 H(+) = D-ribulose 1,5-bisphosphate + CO2 + H2O. The catalysed reaction is D-ribulose 1,5-bisphosphate + O2 = 2-phosphoglycolate + (2R)-3-phosphoglycerate + 2 H(+). Its function is as follows. RuBisCO catalyzes two reactions: the carboxylation of D-ribulose 1,5-bisphosphate, the primary event in carbon dioxide fixation, as well as the oxidative fragmentation of the pentose substrate. Both reactions occur simultaneously and in competition at the same active site. This Nitrosomonas sp. (strain ENI-11) protein is Ribulose bisphosphate carboxylase large chain.